Here is a 156-residue protein sequence, read N- to C-terminus: Transcription antitermination protein NusB (156 aa).

It belongs to the NusB family.

Functionally, involved in transcription antitermination. Required for transcription of ribosomal RNA (rRNA) genes. Binds specifically to the boxA antiterminator sequence of the ribosomal RNA (rrn) operons. This is Transcription antitermination protein NusB from Rickettsia africae (strain ESF-5).